The following is a 610-amino-acid chain: ESX-5 secretion system protein EccA5 (610 aa).

Gly-357–Thr-364 is an ATP binding site.

This sequence belongs to the CbxX/CfxQ family. As to quaternary structure, part of the ESX-5 / type VII secretion system (T7SS), which is composed of cytosolic and membrane components.

Its subcellular location is the cytoplasm. Functionally, part of the ESX-5 specialized secretion system, which is responsible for the secretion of EsxN and a number of PE_PGRS and PPE proteins. EccA5 exhibits ATPase activity and may provide energy for the export of ESX-5 substrates. The protein is ESX-5 secretion system protein EccA5 of Mycobacterium marinum (strain ATCC BAA-535 / M).